We begin with the raw amino-acid sequence, 335 residues long: Fructose-1,6-bisphosphatase class 1 (335 aa).

Residues glutamate 90, aspartate 113, leucine 115, and aspartate 116 each contribute to the Mg(2+) site. Residues 116-119 (DGSS), asparagine 209, tyrosine 242, and lysine 272 each bind substrate. Glutamate 278 lines the Mg(2+) pocket.

Belongs to the FBPase class 1 family. As to quaternary structure, homotetramer. It depends on Mg(2+) as a cofactor.

Its subcellular location is the cytoplasm. The catalysed reaction is beta-D-fructose 1,6-bisphosphate + H2O = beta-D-fructose 6-phosphate + phosphate. Its pathway is carbohydrate biosynthesis; gluconeogenesis. The chain is Fructose-1,6-bisphosphatase class 1 from Histophilus somni (strain 2336) (Haemophilus somnus).